The chain runs to 760 residues: Prolyl endopeptidase (760 aa).

Active-site charge relay system residues include serine 609, aspartate 693, and histidine 730.

The protein belongs to the peptidase S9A family.

It is found in the cytoplasm. The enzyme catalyses Hydrolysis of Pro-|-Xaa &gt;&gt; Ala-|-Xaa in oligopeptides.. Its activity is regulated as follows. Inhibited by chymostatin, Boc-Glu(NHO-Bz)-Pyrrolidide, Z-Pro-L-prolinal dimethyacetal and the peptide H-H-L-P-P-P-V-OH. Its function is as follows. Cleaves peptide bonds on the C-terminal side of prolyl residues within peptides that are up to approximately 30 amino acids long. The chain is Prolyl endopeptidase (prep) from Dictyostelium discoideum (Social amoeba).